Consider the following 685-residue polypeptide: Protein SPT2 homolog (685 aa).

The important for interaction with DNA stretch occupies residues 1-570 (MDFREILMIA…PPLSGYRAAQ (570 aa)). Residue Lys37 forms a Glycyl lysine isopeptide (Lys-Gly) (interchain with G-Cter in SUMO2) linkage. Residues 45-81 (QAFLKRKEEELRRKALEEKRRKEELVKKRIELKHDKK) are a coiled coil. The disordered stretch occupies residues 79–168 (DKKARAMAKR…PLKSAPPPMN (90 aa)). Basic and acidic residues predominate over residues 101-111 (IEEKSKKRQAT). A coiled-coil region spans residues 123–148 (YEMEEENEFLEYNHAESEQEYEEEQE). Lys187 participates in a covalent cross-link: Glycyl lysine isopeptide (Lys-Gly) (interchain with G-Cter in SUMO2). Composition is skewed to basic and acidic residues over residues 188-209 (VVKK…EFLE) and 260-275 (HAEK…EKHL). Disordered regions lie at residues 188-615 (VVKK…QEEI) and 644-685 (SWKE…LKRR). At Ser278 the chain carries Phosphoserine. 3 stretches are compositionally biased toward low complexity: residues 317 to 330 (SSTS…TSAS), 365 to 385 (SPGV…PSTG), and 402 to 415 (GSSS…ISGS). Polar residues predominate over residues 416–431 (KKPTNDSNPSRRTVSG). Low complexity predominate over residues 435–501 (PGQPASSSGG…PGRSISGSIP (67 aa)). Ser471 is modified (phosphoserine). A compositionally biased stretch (polar residues) spans 519 to 529 (GPGQTVSSSGP). Low complexity predominate over residues 542–553 (ISSKNIISRSSN). Residues 571–685 (GPQRLPFPTG…RRRAKKLKRR (115 aa)) are important for interaction with histones. Lys582 carries the N6-acetyllysine modification. The span at 587-613 (YEEEDDDDDEYDSEMEDFIEDEGEPQE) shows a compositional bias: acidic residues. Ser599 is subject to Phosphoserine. Composition is skewed to basic and acidic residues over residues 644 to 655 (SWKEQQKEEAKS) and 666 to 676 (EMRREEEEMQR). Positions 645-685 (WKEQQKEEAKSLRLGMQEDLEEMRREEEEMQRRRAKKLKRR) form a coiled coil.

The protein belongs to the SPT2 family. Interacts with histones. Interacts with a heterotetrameric complex formed by histone H3 and H4, especially when the histone tetramer is not bound to DNA. Interacts with histone H3.3.

Its subcellular location is the nucleus. The protein resides in the nucleolus. Histone chaperone that stabilizes pre-existing histone tetramers and regulates replication-independent histone exchange on chromatin. Required for normal chromatin refolding in the coding region of transcribed genes, and for the suppression of spurious transcription. Binds DNA and histones and promotes nucleosome assembly (in vitro). Facilitates formation of tetrameric histone complexes containing histone H3 and H4. Modulates RNA polymerase 1-mediated transcription. Binds DNA, with a preference for branched DNA species, such as Y-form DNA and Holliday junction DNA. In Homo sapiens (Human), this protein is Protein SPT2 homolog (SPTY2D1).